The chain runs to 564 residues: Kelch repeat and BTB domain-containing protein 1 (564 aa).

Residues Cys21 to Asn88 form the BTB domain. Kelch repeat units follow at residues Ile252–Asn297, Ile298–Glu346, Tyr347–Gly395, Ile397–Gly441, Lys442–Asn492, and Leu494–Ile539.

It belongs to the poxviruses Kelch family. Interacts (via BTB domain) with host CUL3.

The protein resides in the host cytoplasm. Its function is as follows. Probable substrate-specific adapter of CUL3-containing E3 ubiquitin-protein ligases which mediate the ubiquitination and subsequent proteasomal degradation of host target proteins. The polypeptide is Kelch repeat and BTB domain-containing protein 1 (KBTB1) (Homo sapiens (Human)).